The primary structure comprises 1672 residues: Probable outer membrane protein PmpB (1672 aa).

The signal sequence occupies residues 1–14 (MSSMKWLSATAVFA). 4 disordered regions span residues 69-122 (IPVK…GGAF), 203-263 (NTAE…GSGG), 384-415 (EAQT…AKGG), and 734-765 (STGV…PAPA). Composition is skewed to low complexity over residues 77–88 (DDSSTSTPTTSS), 100–111 (SSSSSPNSGDTS), and 203–234 (NTAE…SKVQ). 2 stretches are compositionally biased toward polar residues: residues 235-256 (SLFT…QTPS) and 384-399 (EAQT…SQSG). The segment covering 734-744 (STGVATTATTS) has biased composition (low complexity). An Autotransporter domain is found at 1379–1672 (DDAAYNNFWV…MTSCGARMIF (294 aa)).

Belongs to the PMP outer membrane protein family.

The protein localises to the secreted. It is found in the cell wall. The protein resides in the cell outer membrane. This chain is Probable outer membrane protein PmpB (pmpB), found in Chlamydia muridarum (strain MoPn / Nigg).